Here is a 95-residue protein sequence, read N- to C-terminus: uncharacterized protein (95 aa).

This is an uncharacterized protein from Escherichia coli O6:H1 (strain CFT073 / ATCC 700928 / UPEC).